The chain runs to 364 residues: tRNA-specific 2-thiouridylase MnmA (364 aa).

ATP is bound by residues 12-19 (GMSGGVDS) and methionine 38. The interaction with target base in tRNA stretch occupies residues 98 to 100 (NPD). The active-site Nucleophile is the cysteine 103. Cysteine 103 and cysteine 199 are oxidised to a cystine. Glycine 127 is a binding site for ATP. The interval 149-151 (KDQ) is interaction with tRNA. Catalysis depends on cysteine 199, which acts as the Cysteine persulfide intermediate. Residues 307-308 (RY) are interaction with tRNA.

Belongs to the MnmA/TRMU family.

It is found in the cytoplasm. The catalysed reaction is S-sulfanyl-L-cysteinyl-[protein] + uridine(34) in tRNA + AH2 + ATP = 2-thiouridine(34) in tRNA + L-cysteinyl-[protein] + A + AMP + diphosphate + H(+). Functionally, catalyzes the 2-thiolation of uridine at the wobble position (U34) of tRNA, leading to the formation of s(2)U34. In Shouchella clausii (strain KSM-K16) (Alkalihalobacillus clausii), this protein is tRNA-specific 2-thiouridylase MnmA.